Reading from the N-terminus, the 32-residue chain is Photosystem II reaction center protein Z (32 aa).

The chain crosses the membrane as a helical span at residues 9–29 (IIFSGSLIWVFLLIIVGFLNY).

The protein belongs to the PsbZ family. As to quaternary structure, PSII is composed of 1 copy each of membrane proteins PsbA, PsbB, PsbC, PsbD, PsbE, PsbF, PsbH, PsbI, PsbJ, PsbK, PsbL, PsbM, PsbT, PsbY, PsbZ, Psb30/Ycf12, at least 3 peripheral proteins of the oxygen-evolving complex and a large number of cofactors. It forms dimeric complexes.

It is found in the plastid. It localises to the chloroplast thylakoid membrane. May control the interaction of photosystem II (PSII) cores with the light-harvesting antenna, regulates electron flow through the 2 photosystem reaction centers. PSII is a light-driven water plastoquinone oxidoreductase, using light energy to abstract electrons from H(2)O, generating a proton gradient subsequently used for ATP formation. This chain is Photosystem II reaction center protein Z, found in Euglena myxocylindracea.